Reading from the N-terminus, the 272-residue chain is Type III pantothenate kinase (272 aa).

6–13 serves as a coordination point for ATP; it reads DVRNTHTV. 109 to 112 lines the substrate pocket; the sequence is GADR. D111 acts as the Proton acceptor in catalysis. D131 is a binding site for K(+). S134 is an ATP binding site. Residue T186 participates in substrate binding.

Belongs to the type III pantothenate kinase family. Homodimer. NH4(+) is required as a cofactor. K(+) serves as cofactor.

The protein localises to the cytoplasm. The enzyme catalyses (R)-pantothenate + ATP = (R)-4'-phosphopantothenate + ADP + H(+). It functions in the pathway cofactor biosynthesis; coenzyme A biosynthesis; CoA from (R)-pantothenate: step 1/5. Catalyzes the phosphorylation of pantothenate (Pan), the first step in CoA biosynthesis. This chain is Type III pantothenate kinase, found in Mycobacterium bovis (strain BCG / Pasteur 1173P2).